We begin with the raw amino-acid sequence, 211 residues long: Urease accessory protein UreG (211 aa).

Residue 11 to 18 (GPVGAGKT) participates in GTP binding.

This sequence belongs to the SIMIBI class G3E GTPase family. UreG subfamily. In terms of assembly, homodimer. UreD, UreF and UreG form a complex that acts as a GTP-hydrolysis-dependent molecular chaperone, activating the urease apoprotein by helping to assemble the nickel containing metallocenter of UreC. The UreE protein probably delivers the nickel.

It localises to the cytoplasm. In terms of biological role, facilitates the functional incorporation of the urease nickel metallocenter. This process requires GTP hydrolysis, probably effectuated by UreG. In Actinobacillus pleuropneumoniae serotype 5b (strain L20), this protein is Urease accessory protein UreG.